The primary structure comprises 244 residues: ATP synthase subunit b 2 (244 aa).

Residues 2–22 (TVDWWTIGLQVINVSVLIWLL) traverse the membrane as a helical segment.

Belongs to the ATPase B chain family. In terms of assembly, F-type ATPases have 2 components, F(1) - the catalytic core - and F(0) - the membrane proton channel. F(1) has five subunits: alpha(3), beta(3), gamma(1), delta(1), epsilon(1). F(0) has three main subunits: a(1), b(2) and c(10-14). The alpha and beta chains form an alternating ring which encloses part of the gamma chain. F(1) is attached to F(0) by a central stalk formed by the gamma and epsilon chains, while a peripheral stalk is formed by the delta and b chains.

It is found in the cell inner membrane. F(1)F(0) ATP synthase produces ATP from ADP in the presence of a proton or sodium gradient. F-type ATPases consist of two structural domains, F(1) containing the extramembraneous catalytic core and F(0) containing the membrane proton channel, linked together by a central stalk and a peripheral stalk. During catalysis, ATP synthesis in the catalytic domain of F(1) is coupled via a rotary mechanism of the central stalk subunits to proton translocation. Functionally, component of the F(0) channel, it forms part of the peripheral stalk, linking F(1) to F(0). This chain is ATP synthase subunit b 2, found in Gluconobacter oxydans (strain 621H) (Gluconobacter suboxydans).